Consider the following 471-residue polypeptide: Glutamate--tRNA ligase (471 aa).

Residues 9–19 (PSPTGYLHVGG) carry the 'HIGH' region motif. Residues Cys98, Cys100, Cys125, and His127 each contribute to the Zn(2+) site. Positions 237 to 241 (KLSKR) match the 'KMSKS' region motif. Lys240 is a binding site for ATP.

The protein belongs to the class-I aminoacyl-tRNA synthetase family. Glutamate--tRNA ligase type 1 subfamily. As to quaternary structure, monomer. Zn(2+) serves as cofactor.

The protein localises to the cytoplasm. The enzyme catalyses tRNA(Glu) + L-glutamate + ATP = L-glutamyl-tRNA(Glu) + AMP + diphosphate. Its function is as follows. Catalyzes the attachment of glutamate to tRNA(Glu) in a two-step reaction: glutamate is first activated by ATP to form Glu-AMP and then transferred to the acceptor end of tRNA(Glu). This is Glutamate--tRNA ligase from Enterobacter sp. (strain 638).